Here is a 26-residue protein sequence, read N- to C-terminus: THSGGACNSHDQCCNAFCSTATRTCV.

2 cysteine pairs are disulfide-bonded: Cys7-Cys18 and Cys13-Cys25.

This sequence belongs to the conotoxin O1 superfamily. In terms of tissue distribution, expressed by the venom duct.

It localises to the secreted. This is Conotoxin Eb6.17 (E1) from Conus ebraeus (Hebrew cone).